The following is a 467-amino-acid chain: tRNA-2-methylthio-N(6)-dimethylallyladenosine synthase (467 aa).

An MTTase N-terminal domain is found at 2-118; sequence PSVFIKTFGC…VAEIADNLLK (117 aa). Cys11, Cys47, Cys81, Cys159, Cys163, and Cys166 together coordinate [4Fe-4S] cluster. In terms of domain architecture, Radical SAM core spans 145–379; it reads TKAQPIAYVS…LEIQNKITME (235 aa). Positions 382–445 constitute a TRAM domain; the sequence is QKWVGQVVEI…GHTFYGTPLI (64 aa).

Belongs to the methylthiotransferase family. MiaB subfamily. In terms of assembly, monomer. [4Fe-4S] cluster is required as a cofactor.

Its subcellular location is the cytoplasm. The enzyme catalyses N(6)-dimethylallyladenosine(37) in tRNA + (sulfur carrier)-SH + AH2 + 2 S-adenosyl-L-methionine = 2-methylsulfanyl-N(6)-dimethylallyladenosine(37) in tRNA + (sulfur carrier)-H + 5'-deoxyadenosine + L-methionine + A + S-adenosyl-L-homocysteine + 2 H(+). In terms of biological role, catalyzes the methylthiolation of N6-(dimethylallyl)adenosine (i(6)A), leading to the formation of 2-methylthio-N6-(dimethylallyl)adenosine (ms(2)i(6)A) at position 37 in tRNAs that read codons beginning with uridine. The polypeptide is tRNA-2-methylthio-N(6)-dimethylallyladenosine synthase (Methylacidiphilum infernorum (isolate V4) (Methylokorus infernorum (strain V4))).